A 365-amino-acid polypeptide reads, in one-letter code: DNA replication and repair protein RecF (365 aa).

30–37 contributes to the ATP binding site; it reads GRNAQGKT.

This sequence belongs to the RecF family.

It is found in the cytoplasm. Functionally, the RecF protein is involved in DNA metabolism; it is required for DNA replication and normal SOS inducibility. RecF binds preferentially to single-stranded, linear DNA. It also seems to bind ATP. In Streptococcus pneumoniae (strain CGSP14), this protein is DNA replication and repair protein RecF.